The primary structure comprises 1607 residues: Dicer-like protein 1 (1607 aa).

The interval Met1–Asp74 is disordered. One can recognise a Helicase ATP-binding domain in the interval Leu142–Leu324. Leu155 to Thr162 lines the ATP pocket. The short motif at Asp267–His270 is the DEAH box element. Residues Lys461–Thr632 form the Helicase C-terminal domain. Residues Ser665–Ala755 enclose the Dicer dsRNA-binding fold domain. Residues Gly905 to Pro1040 enclose the PAZ domain. RNase III domains lie at Leu1063–Gln1219 and Ala1272–Arg1447. Mg(2+) is bound by residues Glu1312, Asp1433, and Glu1436. The DRBM domain occupies His1478 to Gly1556. Positions 1493, 1527, 1568, and 1570 each coordinate Zn(2+).

It belongs to the helicase family. Dicer subfamily. Mg(2+) is required as a cofactor. The cofactor is Mn(2+).

Its function is as follows. Dicer-like endonuclease involved in cleaving double-stranded RNA in the RNA interference (RNAi) pathway. Produces 21 to 25 bp dsRNAs (siRNAs) which target the selective destruction of homologous RNAs leading to sequence-specific suppression of gene expression, called post-transcriptional gene silencing (PTGS). Part of a broad host defense response against viral infection and transposons. This is Dicer-like protein 1 (DCL1) from Chaetomium globosum (strain ATCC 6205 / CBS 148.51 / DSM 1962 / NBRC 6347 / NRRL 1970) (Soil fungus).